A 382-amino-acid polypeptide reads, in one-letter code: Carbamoyl phosphate synthase small chain (382 aa).

Residues 1–187 (MPTPALLVLA…EFRPQTATEE (187 aa)) form a CPSase region. Positions 47, 239, and 241 each coordinate L-glutamine. Residues 191–377 (TVVAIDFGVK…VAQMRAYRQQ (187 aa)) enclose the Glutamine amidotransferase type-1 domain. Cys-267 acts as the Nucleophile in catalysis. L-glutamine is bound by residues Leu-268, Gln-271, Asn-307, Gly-309, and Phe-310. Residues His-350 and Glu-352 contribute to the active site.

It belongs to the CarA family. In terms of assembly, composed of two chains; the small (or glutamine) chain promotes the hydrolysis of glutamine to ammonia, which is used by the large (or ammonia) chain to synthesize carbamoyl phosphate. Tetramer of heterodimers (alpha,beta)4.

The enzyme catalyses hydrogencarbonate + L-glutamine + 2 ATP + H2O = carbamoyl phosphate + L-glutamate + 2 ADP + phosphate + 2 H(+). It carries out the reaction L-glutamine + H2O = L-glutamate + NH4(+). The protein operates within amino-acid biosynthesis; L-arginine biosynthesis; carbamoyl phosphate from bicarbonate: step 1/1. It participates in pyrimidine metabolism; UMP biosynthesis via de novo pathway; (S)-dihydroorotate from bicarbonate: step 1/3. In terms of biological role, small subunit of the glutamine-dependent carbamoyl phosphate synthetase (CPSase). CPSase catalyzes the formation of carbamoyl phosphate from the ammonia moiety of glutamine, carbonate, and phosphate donated by ATP, constituting the first step of 2 biosynthetic pathways, one leading to arginine and/or urea and the other to pyrimidine nucleotides. The small subunit (glutamine amidotransferase) binds and cleaves glutamine to supply the large subunit with the substrate ammonia. In Thermosynechococcus vestitus (strain NIES-2133 / IAM M-273 / BP-1), this protein is Carbamoyl phosphate synthase small chain.